A 229-amino-acid polypeptide reads, in one-letter code: Apoptosis regulator Bcl-2 (229 aa).

The BH4 signature appears at 10–30 (DNREIVMKYIHYKLSQRGYEW). The segment at 30 to 82 (WDAGDAGAAPPGAAPAPGILSSQPGRTPAPSRTSPPPPPAAAAGPAPSPVPPV) is disordered. Residues 33 to 61 (GDAGAAPPGAAPAPGILSSQPGRTPAPSR) are compositionally biased toward low complexity. Residue threonine 62 is modified to Phosphothreonine; by MAPK8. Positions 62–81 (TSPPPPPAAAAGPAPSPVPP) are enriched in pro residues. Serine 63 carries the post-translational modification Phosphoserine; by MAPK8 and PKC. Phosphoserine; by MAPK8 is present on serine 77. Residues 83 to 97 (VHLTLRQAGDDFSRR) carry the BH3 motif. The short motif at 126-145 (ELFRDGVNWGRIVAFFEFGG) is the BH1 element. The BH2 motif lies at 177–192 (TWIQDNGGWDAFVELY). Residues 202 to 223 (FSWLSLKALLSLALVGACITLG) form a helical membrane-spanning segment.

This sequence belongs to the Bcl-2 family. Forms homodimers, and heterodimers with BAX, BAD, BAK and Bcl-X(L). Heterodimerization with BAX requires intact BH1 and BH2 motifs, and is necessary for anti-apoptotic activity. Component of the complex, at least composed of LRPPRC, BECN1 and BCL2; the interactions prevent BECN1 from forming an autophagy-inducing complex with PIK3C3. Interacts with EI24. Also interacts with APAF1, BBC3, BCL2L1, BNIPL, MRPL41 and TP53BP2. Binding to FKBP8 seems to target BCL2 to the mitochondria and probably interferes with the binding of BCL2 to its targets. Interacts with BAG1 in an ATP-dependent manner. Interacts with RAF1 (the 'Ser-338' and 'Ser-339' phosphorylated form). Interacts (via the BH4 domain) with EGLN3; the interaction prevents the formation of the BAX-BCL2 complex and inhibits the anti-apoptotic activity of BCL2. Interacts with G0S2; this interaction also prevents the formation of the anti-apoptotic BAX-BCL2 complex. Interacts with RTL10/BOP. Interacts with the SCF(FBXO10) complex. Interacts (via the loop between motifs BH4 and BH3) with NLRP1 (via LRR repeats), but not with NLRP2, NLRP3, NLRP4, PYCARD, nor MEFV. Interacts with GIMAP3/IAN4, GIMAP4/IAN1 and GIMAP5/IAN5. Interacts with BCAP31. Interacts with IRF3; the interaction is inhibited by Sendai virus infection. Interacts with BECN1; thereby inhibiting autophagy in non-starvation conditions. Interacts with AMBRA1; thereby inhibiting autophagy. In terms of processing, phosphorylation/dephosphorylation on Ser-63 regulates anti-apoptotic activity. Growth factor-stimulated phosphorylation on Ser-63 by PKC is required for the anti-apoptosis activity and occurs during the G2/M phase of the cell cycle. In the absence of growth factors, BCL2 appears to be phosphorylated by other protein kinases such as ERKs and stress-activated kinases. Phosphorylated by MAPK8/JNK1 at Thr-62, Ser-63 and Ser-77, which stimulates starvation-induced autophagy. Dephosphorylated by protein phosphatase 2A (PP2A). Proteolytically cleaved by caspases during apoptosis. The cleaved protein, lacking the BH4 motif, has pro-apoptotic activity, causes the release of cytochrome c into the cytosol promoting further caspase activity. Post-translationally, monoubiquitinated by PRKN, leading to an increase in its stability. Ubiquitinated by SCF(FBXO10), leading to its degradation by the proteasome.

The protein localises to the mitochondrion outer membrane. It localises to the nucleus membrane. The protein resides in the endoplasmic reticulum membrane. Its subcellular location is the cytoplasm. In terms of biological role, suppresses apoptosis in a variety of cell systems including factor-dependent lymphohematopoietic and neural cells. Regulates cell death by controlling the mitochondrial membrane permeability. Appears to function in a feedback loop system with caspases. Inhibits caspase activity either by preventing the release of cytochrome c from the mitochondria and/or by binding to the apoptosis-activating factor (APAF-1). Also acts as an inhibitor of autophagy: interacts with BECN1 and AMBRA1 during non-starvation conditions and inhibits their autophagy function. May attenuate inflammation by impairing NLRP1-inflammasome activation, hence CASP1 activation and IL1B release. The protein is Apoptosis regulator Bcl-2 (BCL2) of Bos taurus (Bovine).